The primary structure comprises 159 residues: Ribonuclease H (159 aa).

One can recognise an RNase H type-1 domain in the interval 2-144 (SQDPVIIHTD…ADELATRGLQ (143 aa)). Residues aspartate 11, glutamate 50, aspartate 72, and aspartate 136 each contribute to the Mg(2+) site.

Belongs to the RNase H family. As to quaternary structure, monomer. The cofactor is Mg(2+).

The protein resides in the cytoplasm. The enzyme catalyses Endonucleolytic cleavage to 5'-phosphomonoester.. Functionally, endonuclease that specifically degrades the RNA of RNA-DNA hybrids. This is Ribonuclease H from Mycolicibacterium smegmatis (strain ATCC 700084 / mc(2)155) (Mycobacterium smegmatis).